The sequence spans 249 residues: ATP synthase subunit a (249 aa).

The next 5 helical transmembrane spans lie at 35-55 (ILLT…ISSL), 92-112 (VPFI…GALV), 131-151 (INTT…AGIS), 187-209 (LFGN…PLFI), and 221-241 (SAIQ…EALE).

This sequence belongs to the ATPase A chain family. F-type ATPases have 2 components, CF(1) - the catalytic core - and CF(0) - the membrane proton channel. CF(1) has five subunits: alpha(3), beta(3), gamma(1), delta(1), epsilon(1). CF(0) has four main subunits: a, b, b' and c.

It is found in the cellular thylakoid membrane. In terms of biological role, key component of the proton channel; it plays a direct role in the translocation of protons across the membrane. The protein is ATP synthase subunit a of Trichodesmium erythraeum (strain IMS101).